The primary structure comprises 293 residues: 4-hydroxy-tetrahydrodipicolinate synthase (293 aa).

Thr-45 lines the pyruvate pocket. Tyr-133 acts as the Proton donor/acceptor in catalysis. Catalysis depends on Lys-162, which acts as the Schiff-base intermediate with substrate. Residue Ile-204 participates in pyruvate binding.

It belongs to the DapA family. In terms of assembly, homotetramer; dimer of dimers.

Its subcellular location is the cytoplasm. The enzyme catalyses L-aspartate 4-semialdehyde + pyruvate = (2S,4S)-4-hydroxy-2,3,4,5-tetrahydrodipicolinate + H2O + H(+). It participates in amino-acid biosynthesis; L-lysine biosynthesis via DAP pathway; (S)-tetrahydrodipicolinate from L-aspartate: step 3/4. Catalyzes the condensation of (S)-aspartate-beta-semialdehyde [(S)-ASA] and pyruvate to 4-hydroxy-tetrahydrodipicolinate (HTPA). The sequence is that of 4-hydroxy-tetrahydrodipicolinate synthase from Brucella abortus biovar 1 (strain 9-941).